The primary structure comprises 168 residues: Protein B-Myc (168 aa).

Disordered stretches follow at residues Asp26–Glu94 and Glu146–Thr168. Residues Ser59 and Ser67 each carry the phosphoserine modification.

It is found in the nucleus. Seems to act as an inhibitor of cellular proliferation. The sequence is that of Protein B-Myc (Mycb) from Rattus norvegicus (Rat).